Reading from the N-terminus, the 819-residue chain is Glycine-rich domain-containing protein 1 (819 aa).

Its function is as follows. Plays a regulatory role in abscisic acid (ABA) signaling and tolerance to abiotic stress during germination. May be involved in the regulation of the ABI transcriptional factors. The protein is Glycine-rich domain-containing protein 1 of Arabidopsis thaliana (Mouse-ear cress).